The following is a 122-amino-acid chain: uncharacterized protein (122 aa).

2 consecutive transmembrane segments (helical) span residues 9-29 (VATVDAIFAISSSTFLWSTWV) and 60-80 (LFSFTSVLTVSTFTFASCLIM).

The protein localises to the cytoplasm. Its subcellular location is the membrane. This is an uncharacterized protein from Schizosaccharomyces pombe (strain 972 / ATCC 24843) (Fission yeast).